The following is a 754-amino-acid chain: Carbon catabolite repressor protein 4 homolog 6 (754 aa).

Disordered stretches follow at residues 34–65 (PYRG…DQFV) and 85–176 (EPYR…KTPP). Residues 50 to 61 (FSDRPYNDDAGR) show a composition bias toward basic and acidic residues. Composition is skewed to polar residues over residues 96 to 106 (QRQQPPFNQNY) and 116 to 133 (GQWQ…NQNY). Over residues 162-171 (KPSDYREWEY) the composition is skewed to basic and acidic residues. Glu237 contributes to the Mg(2+) binding site. Disordered regions lie at residues 404 to 431 (VSAE…QGQV) and 494 to 558 (IENR…DQDI). Polar residues-rich tracts occupy residues 415–431 (NYTT…QGQV), 503–525 (GNLS…QHAS), and 534–545 (DRSVSSGLSETE).

This sequence belongs to the CCR4/nocturin family. As to quaternary structure, component of the CCR4-NOT complex, at least composed of CRR4 and CAF1 proteins. Mg(2+) is required as a cofactor.

The protein localises to the nucleus. The protein resides in the cytoplasm. The catalysed reaction is Exonucleolytic cleavage of poly(A) to 5'-AMP.. Functionally, acts as a catalytic component of the CCR4-NOT core complex, which in the nucleus seems to be a general transcription factor, and in the cytoplasm the major mRNA deadenylase involved in mRNA turnover. This is Carbon catabolite repressor protein 4 homolog 6 (CCR4-6) from Arabidopsis thaliana (Mouse-ear cress).